The chain runs to 514 residues: Carboxysome shell carbonic anhydrase (514 aa).

A disordered region spans residues 1-27 (MAYRNRNLASQTQRPLAPTAPRRRPVV). Zn(2+) is bound at residue Cys175. Asp177 functions as the Proton acceptor in the catalytic mechanism. Residues His243 and Cys254 each contribute to the Zn(2+) site.

This sequence belongs to the beta-class carbonic anhydrase family. CsoSCA subfamily. As to quaternary structure, homodimer. Requires Zn(2+) as cofactor.

The protein localises to the carboxysome. It catalyses the reaction hydrogencarbonate + H(+) = CO2 + H2O. Its function is as follows. Reversible hydration of carbon dioxide. Essential for photosynthetic carbon dioxide fixation, supplies CO(2) to RuBisCO (ribulose bisphosphate carboxylase, cbbL-cbbS) in the carboxysome. The chain is Carboxysome shell carbonic anhydrase from Prochlorococcus marinus (strain MIT 9313).